Here is an 884-residue protein sequence, read N- to C-terminus: MKASDIRQKFLTFFETKGHTVVRSSPLVPGNDPTLLFTNSGMVQFKDVFLGTDKRPYVRAASVQRCLRAGGKHNDLENVGYTARHHTFFEMLGNWSFGDYFKRDALVWAWELLTQEYKLPADKLWATVYQTDDEAYDIWTKVIGLPPERVVRIGDNKGAPYASDNFWQMAETGPCGPCSEIFYDHGPEIWGGPPGSPEADGDRYIEIWNNVFMQFDRQLDPQTGEYTLTPLPAPCVDTGMGMERLAAILQHVHSNYEIDLFQALVSAAARETNTKDLANNSLRVIADHIRACAFLIVDGVIPGNEGRGYVLRRIIRRAIRHGYKLGCRAAFFHKLVDDLVKEMGEAYPELREARDRVVDVLRTEEARFFETIEHGMSILDGALGELKAAGKDEKQRMLDGELAFKLHDTYGFPLDLTQDVCRENDVIVDEAAFDAAMNRQREQARAAGKFKMAAGTLDYTGDKTTFHGYDQLLSETSRVTALFVDGASVPEMRPGQTGVVVLDHTPFYAESGGQVGDQGTLKAATVWFDVADTQKVLPEVFGHQGTLRTGVLKVGDAVGAEVDAVRRARTMRNHSATHLMHKALREVLGAHVQQKGSLVDADKTRFDFSHNTPMTPLQIREVEARVNAEILANASTNAQMMGFDDAVKSGAMALFGEKYGDEVRVLTIGSSKELCGGTHVARTGDIGLFKIVGESGVAAGIRRVEAITGDNVLHYLQTLDTRIGEAAAALRAQPSELTQRIVQVQDQVKSLEKELERLKSKLAASQGDELVSQAVDVAGIKVLAAKLDGADAKTLRETMDKLKDKLKTAAIVLGSVSDGKVALIAGVTADATARIKAGELVNFVAQQVGGKGGGRPDMAQAGGTEPDKLPQALAGVTAWVQQKV.

4 residues coordinate Zn(2+): histidine 574, histidine 578, cysteine 675, and histidine 679.

It belongs to the class-II aminoacyl-tRNA synthetase family. Requires Zn(2+) as cofactor.

It localises to the cytoplasm. It carries out the reaction tRNA(Ala) + L-alanine + ATP = L-alanyl-tRNA(Ala) + AMP + diphosphate. Its function is as follows. Catalyzes the attachment of alanine to tRNA(Ala) in a two-step reaction: alanine is first activated by ATP to form Ala-AMP and then transferred to the acceptor end of tRNA(Ala). Also edits incorrectly charged Ser-tRNA(Ala) and Gly-tRNA(Ala) via its editing domain. The polypeptide is Alanine--tRNA ligase (Ralstonia nicotianae (strain ATCC BAA-1114 / GMI1000) (Ralstonia solanacearum)).